Reading from the N-terminus, the 159-residue chain is uncharacterized protein (159 aa).

This is an uncharacterized protein from Bacillus subtilis (strain 168).